Here is a 481-residue protein sequence, read N- to C-terminus: Aspartyl/glutamyl-tRNA(Asn/Gln) amidotransferase subunit B (481 aa).

This sequence belongs to the GatB/GatE family. GatB subfamily. As to quaternary structure, heterotrimer of A, B and C subunits.

The catalysed reaction is L-glutamyl-tRNA(Gln) + L-glutamine + ATP + H2O = L-glutaminyl-tRNA(Gln) + L-glutamate + ADP + phosphate + H(+). It carries out the reaction L-aspartyl-tRNA(Asn) + L-glutamine + ATP + H2O = L-asparaginyl-tRNA(Asn) + L-glutamate + ADP + phosphate + 2 H(+). Allows the formation of correctly charged Asn-tRNA(Asn) or Gln-tRNA(Gln) through the transamidation of misacylated Asp-tRNA(Asn) or Glu-tRNA(Gln) in organisms which lack either or both of asparaginyl-tRNA or glutaminyl-tRNA synthetases. The reaction takes place in the presence of glutamine and ATP through an activated phospho-Asp-tRNA(Asn) or phospho-Glu-tRNA(Gln). The chain is Aspartyl/glutamyl-tRNA(Asn/Gln) amidotransferase subunit B from Ectopseudomonas mendocina (strain ymp) (Pseudomonas mendocina).